Here is a 78-residue protein sequence, read N- to C-terminus: Large ribosomal subunit protein bL28 (78 aa).

The protein belongs to the bacterial ribosomal protein bL28 family.

In Thioalkalivibrio sulfidiphilus (strain HL-EbGR7), this protein is Large ribosomal subunit protein bL28.